Here is a 163-residue protein sequence, read N- to C-terminus: Ribonuclease H (163 aa).

Residues Thr16–Thr157 form the RNase H type-1 domain. 4 residues coordinate Mg(2+): Asp25, Glu63, Asp85, and Asp149.

This sequence belongs to the RNase H family. Monomer. Mg(2+) serves as cofactor.

It is found in the cytoplasm. The enzyme catalyses Endonucleolytic cleavage to 5'-phosphomonoester.. Endonuclease that specifically degrades the RNA of RNA-DNA hybrids. The protein is Ribonuclease H of Pelobacter propionicus (strain DSM 2379 / NBRC 103807 / OttBd1).